The chain runs to 569 residues: Glucose-6-phosphate isomerase, cytosolic 2 (569 aa).

Residue E360 is the Proton donor of the active site. Catalysis depends on residues H391 and K516.

The protein belongs to the GPI family. Homodimer.

Its subcellular location is the cytoplasm. It carries out the reaction alpha-D-glucose 6-phosphate = beta-D-fructose 6-phosphate. The protein operates within carbohydrate degradation; glycolysis; D-glyceraldehyde 3-phosphate and glycerone phosphate from D-glucose: step 2/4. This Clarkia concinna (Red ribbons) protein is Glucose-6-phosphate isomerase, cytosolic 2 (PGIC2).